The chain runs to 2190 residues: Highly-reducing polyketide synthase 1 (2190 aa).

Positions 6–431 constitute a Ketosynthase family 3 (KS3) domain; the sequence is LTPVAIVGYA…GANAHVVLGA (426 aa). Residues Cys-179, His-315, and His-355 each act as for beta-ketoacyl synthase activity in the active site. In terms of domain architecture, Malonyl-CoA:ACP transacylase (MAT) spans 541–857; the sequence is FVFTGQGAQW…VSVLARGQNA (317 aa). Positions 925-1061 are N-terminal hotdog fold; sequence NDLLGSLADW…GLVGVRNSPA (137 aa). The region spanning 925–1246 is the PKS/mFAS DH domain; it reads NDLLGSLADW…MTPLRESSGS (322 aa). The active-site Proton acceptor; for dehydratase activity is His-957. The interval 1089-1246 is C-terminal hotdog fold; it reads TETVDVQAMY…MTPLRESSGS (158 aa). Asp-1154 acts as the Proton donor; for dehydratase activity in catalysis. The Enoyl reductase (ER) domain occupies 1494 to 1804; that stretch reads GSLDSFYFVD…SGKSMGKLVI (311 aa). Positions 1828–2005 constitute a Ketoreductase (KR) domain; it reads ASYLIVGGTG…GTSLDLTAVS (178 aa). Residues 2107 to 2184 form the Carrier domain; sequence KALEVLYGAL…ELAKLISKKS (78 aa). Ser-2144 is subject to O-(pantetheine 4'-phosphoryl)serine.

Pantetheine 4'-phosphate serves as cofactor.

In terms of biological role, highly-reducing polyketide synthase; part of the gene cluster that mediates the biosynthesis of liamocins, glycolipids (also called heavy oils) composed of a single mannitol or arabitol headgroup linked to either three, four or even six 3,5-dihydroxydecanoic ester tail-groups. Within the pathway, PKS1 is responsible for biosynthesis of 3,5-dihydroxydecanoic acid from acetyl-CoA and malonyl-CoA. A phosphopantetheine transferase (PPTase) activates the HR-PKS. The esterase EST1 then catalyzes ester bond formation between 3,5-dihydroxydecanoic acid and mannitol (provided by the mannitol-1-phosphate 5-dehydrogenase and the NADP-dependent mannitol dehydrogenase) or arabinol (provided by the L-arabinitol 4-dehydrogenase). This chain is Highly-reducing polyketide synthase 1, found in Aureobasidium melanogenum (Aureobasidium pullulans var. melanogenum).